We begin with the raw amino-acid sequence, 530 residues long: Tegument protein UL21 homolog (530 aa).

It belongs to the alphaherpesvirinae UL21 protein family. In terms of assembly, interacts (via C-terminus) with UL16.

Its subcellular location is the virion tegument. The protein localises to the host cytoplasm. It localises to the host nucleus. Its function is as follows. May participate in DNA packaging/capsid maturation events. Promotes efficient incorporation of tegument proteins UL46, UL49, and US3 homologs into virions. May also play a role in capsid transport to the trans-Golgi network (TGN). The chain is Tegument protein UL21 homolog from Equus caballus (Horse).